We begin with the raw amino-acid sequence, 934 residues long: Bifunctional uridylyltransferase/uridylyl-removing enzyme (934 aa).

Residues 1–379 are uridylyltransferase; the sequence is MSAHDLKLEE…TFSRRKRKLS (379 aa). A uridylyl-removing region spans residues 380–736; it reads DDGAFISENH…AKPHAFEAVT (357 aa). The 118-residue stretch at 496–613 folds into the HD domain; sequence VDEHLLRCIA…IDFADTVQTM (118 aa). 2 consecutive ACT domains span residues 737-818 and 848-931; these read EITV…DMLA and VIEV…RSPQ.

It belongs to the GlnD family. Requires Mg(2+) as cofactor.

The catalysed reaction is [protein-PII]-L-tyrosine + UTP = [protein-PII]-uridylyl-L-tyrosine + diphosphate. It catalyses the reaction [protein-PII]-uridylyl-L-tyrosine + H2O = [protein-PII]-L-tyrosine + UMP + H(+). Its activity is regulated as follows. Uridylyltransferase (UTase) activity is inhibited by glutamine, while glutamine activates uridylyl-removing (UR) activity. Its function is as follows. Modifies, by uridylylation and deuridylylation, the PII regulatory proteins (GlnB and homologs), in response to the nitrogen status of the cell that GlnD senses through the glutamine level. Under low glutamine levels, catalyzes the conversion of the PII proteins and UTP to PII-UMP and PPi, while under higher glutamine levels, GlnD hydrolyzes PII-UMP to PII and UMP (deuridylylation). Thus, controls uridylylation state and activity of the PII proteins, and plays an important role in the regulation of nitrogen assimilation and metabolism. The polypeptide is Bifunctional uridylyltransferase/uridylyl-removing enzyme (Brucella abortus (strain S19)).